The following is an 826-amino-acid chain: Capsid-associated protein Vp91 (826 aa).

An N-terminal signal peptide occupies residues 1-18; it reads MSDVVLLVLAIIFIIIFV. The segment at 147-196 adopts a C2HC BV-type zinc-finger fold; that stretch reads CVPINPCDTRAPGLYAMDEHLLDALVHSQHLDKDYTINAHLQHPTLYLRC. Cystine bridges form between Cys-207/Cys-220 and Cys-260/Cys-273. N-linked (GlcNAc...) asparagine; by host glycosylation is present at Asn-210. Residues 223-281 form the Chitin-binding type-2 domain; it reads NELCQGRPDGYVLDYFPETLLVNEFVECYESKHVVKQCPEQHVFDRQLMTCVQAHPCAF. N-linked (GlcNAc...) asparagine; by host glycans are attached at residues Asn-333, Asn-371, Asn-413, Asn-510, Asn-520, and Asn-609. The disordered stretch occupies residues 651 to 679; it reads GDGDHWGPDLPPPVQPDSEPDESEPEPEV. Positions 668–677 are enriched in acidic residues; that stretch reads SEPDESEPEP. Residue Asn-722 is glycosylated (N-linked (GlcNAc...) asparagine; by host).

It is found in the virion. In terms of biological role, probable capsid-associated protein. The polypeptide is Capsid-associated protein Vp91 (Epiphyas postvittana nucleopolyhedrovirus (EppoMNPV)).